Consider the following 55-residue polypeptide: Caltrin-like protein 2 (55 aa).

Residues 7–55 form the WAP domain; it reads AINRPGSCPRVMIYCPARHPPNKCTSDYDCPKPQKCCPGYCGKQCYQPE.

Post-translationally, glycosylated.

In terms of biological role, inhibits calcium transport into spermatozoa. The polypeptide is Caltrin-like protein 2 (Cavia porcellus (Guinea pig)).